An 851-amino-acid chain; its full sequence is Pentatricopeptide repeat-containing protein At3g54980, mitochondrial (851 aa).

Residues 1–26 constitute a mitochondrion transit peptide; the sequence is MRSLLVFRKIPSRIRLRNLRNNKPFC. 19 PPR repeats span residues 162–196, 197–231, 232–266, 267–301, 303–337, 338–372, 373–407, 408–438, 442–476, 477–511, 512–546, 547–577, 583–617, 618–652, 653–687, 688–722, 723–757, 758–792, and 793–827; these read NSRAFNYLLNAYSKDRQTDHAVDIVNQMLELDVIP, FFPYVNRTLSALVQRNSLTEAKELYSRMVAIGVDG, DNVTTQLLMRASLREEKPAEALEVLSRAIERGAEP, DSLLYSLAVQACCKTLDLAMANSLLREMKEKKLCV, SQETYTSVILASVKQGNMDDAIRLKDEMLSDGISM, NVVAATSLITGHCKNNDLVSALVLFDKMEKEGPSP, NSVTFSVLIEWFRKNGEMEKALEFYKKMEVLGLTP, SVFHVHTIIQGWLKGQKHEEALKLFDESFET, NVFVCNTILSWLCKQGKTDEATELLSKMESRGIGP, NVVSYNNVMLGHCRQKNMDLARIVFSNILEKGLKP, NNYTYSILIDGCFRNHDEQNALEVVNHMTSSNIEV, NGVVYQTIINGLCKVGQTSKARELLANMIEE, SCMSYNSIIDGFFKEGEMDSAVAAYEEMCGNGISP, NVITYTSLMNGLCKNNRMDQALEMRDEMKNKGVKL, DIPAYGALIDGFCKRSNMESASALFSELLEEGLNP, SQPIYNSLISGFRNLGNMVAALDLYKKMLKDGLRC, DLGTYTTLIDGLLKDGNLILASELYTEMQAVGLVP, DEIIYTVIVNGLSKKGQFVKVVKMFEEMKKNNVTP, and NVLIYNAVIAGHYREGNLDEAFRLHDEMLDKGILP.

It belongs to the PPR family. P subfamily.

The protein resides in the mitochondrion. This chain is Pentatricopeptide repeat-containing protein At3g54980, mitochondrial, found in Arabidopsis thaliana (Mouse-ear cress).